We begin with the raw amino-acid sequence, 427 residues long: UBX domain-containing protein 2 (427 aa).

Disordered stretches follow at residues 115–143 and 273–331; these read FDQSPSQIPFPSSNTEDSSEESDSSSRAS and ETSG…GVAD. Positions 311–326 are enriched in low complexity; sequence STTESQGESSSQQAES. A UBX domain is found at 349–425; it reads PGPNVTRIQI…GIQNTALQFE (77 aa). Ser-371 bears the Phosphoserine mark.

In terms of assembly, interacts with cdc48.

Involved in CDC48-dependent protein degradation through the ubiquitin/proteasome pathway. This is UBX domain-containing protein 2 (ubx2) from Schizosaccharomyces pombe (strain 972 / ATCC 24843) (Fission yeast).